The following is a 267-amino-acid chain: Diphthine synthase (267 aa).

S-adenosyl-L-methionine contacts are provided by residues Leu9, Asp85, Val88, 113 to 114, Leu170, Ala211, and His236; that span reads SI.

It belongs to the diphthine synthase family. As to quaternary structure, homodimer.

The enzyme catalyses 2-[(3S)-amino-3-carboxypropyl]-L-histidyl-[translation elongation factor 2] + 3 S-adenosyl-L-methionine = diphthine-[translation elongation factor 2] + 3 S-adenosyl-L-homocysteine + 3 H(+). It functions in the pathway protein modification; peptidyl-diphthamide biosynthesis. In terms of biological role, S-adenosyl-L-methionine-dependent methyltransferase that catalyzes the trimethylation of the amino group of the modified target histidine residue in translation elongation factor 2 (EF-2), to form an intermediate called diphthine. The three successive methylation reactions represent the second step of diphthamide biosynthesis. In Methanococcoides burtonii (strain DSM 6242 / NBRC 107633 / OCM 468 / ACE-M), this protein is Diphthine synthase.